Here is a 113-residue protein sequence, read N- to C-terminus: uncharacterized protein (113 aa).

The signal sequence occupies residues 1–29 (MLVVYMCIWVLYLLLFLFLFLFIASPASL). 2 helical membrane passes run 34–54 (THILQCLYYFSLLLISGCAFF) and 56–76 (QVLCLVLPLFCFVLFCFFYFF).

It localises to the membrane. This is an uncharacterized protein from Saccharomyces cerevisiae (strain ATCC 204508 / S288c) (Baker's yeast).